The chain runs to 323 residues: Ubiquinone biosynthesis protein COQ4, mitochondrial (323 aa).

Histidine 203, aspartate 204, histidine 207, and glutamate 219 together coordinate Zn(2+).

The protein belongs to the COQ4 family. In terms of assembly, component of a multi-subunit COQ enzyme complex, composed of at least COQ3, COQ4, COQ5, COQ6, COQ7 and COQ9. The cofactor is Zn(2+).

It localises to the mitochondrion inner membrane. The enzyme catalyses a 4-hydroxy-3-methoxy-5-(all-trans-polyprenyl)benzoate + H(+) = a 2-methoxy-6-(all-trans-polyprenyl)phenol + CO2. It functions in the pathway cofactor biosynthesis; ubiquinone biosynthesis. Its function is as follows. Lyase that catalyzes the C1-decarboxylation of 4-hydroxy-3-methoxy-5-(all-trans-polyprenyl)benzoic acid into 2-methoxy-6-(all-trans-polyprenyl)phenol during ubiquinone biosynthesis. This is Ubiquinone biosynthesis protein COQ4, mitochondrial from Eremothecium gossypii (strain ATCC 10895 / CBS 109.51 / FGSC 9923 / NRRL Y-1056) (Yeast).